Reading from the N-terminus, the 143-residue chain is MLMLRSPYSDSNALDHFLDELTGSVQFPYWRNADHNSFNFSDNIGEIVNDESKFSVQLDVSHFKPENLKIKLDGRELKIEGIQETKSEHGYLKRSFSKMILLPEDADLPSVKSAISNEGKLQIEAPKKTNSSRSIPINFVAKH.

The 106-residue stretch at 35 to 140 (HNSFNFSDNI…SSRSIPINFV (106 aa)) folds into the sHSP domain.

This sequence belongs to the small heat shock protein (HSP20) family.

This chain is Heat shock protein Hsp-16.41 (hsp-16.41), found in Caenorhabditis elegans.